Consider the following 90-residue polypeptide: Antitoxin epsilon 1 (90 aa).

It belongs to the epsilon antitoxin family. As to quaternary structure, in the presence of the zeta toxin, forms an inactive PezA(2)PezT(2) heterotetramer.

Functionally, antitoxin component of a type II toxin-antitoxin (TA) system. Neutralizes the toxic effect of zeta toxin. Part of a postsegregational killing (PSK) system involved in the killing of plasmid-free cells. Continuous synthesis of the epsilon antitoxin is required to counteract the zeta toxin. This Enterococcus faecalis (Streptococcus faecalis) protein is Antitoxin epsilon 1.